Consider the following 650-residue polypeptide: MRLFIAEKPSLARAIADVLPKPHQRGDGFIKCGADDYVTWCIGHLLEQAEPDAYDPKFKQWRLEHLPIIPEKWQLIPRKDVHKQLTIVEKLIHQADILINAGDPDREGQLLVDEVFSYANLSVDKLNQIQRCLISDLNPSAVEKAVNKLQSNRNFIPLATSALARARADWLYGINMTRAYTLRGRQAGYQGVLSVGRVQTPVLGLIVRRDLEIENFKPQDFFEVLAHIQAETPEKITALSAQEKANIPQFKALWQPSKACEDYQDEEGRVLSLGLVENVVKRIAQQPAEVVEYVDKREHESAPLPYSLSALQIDAAKRYGLSAQEVLDICQRLYETHRLITYPRSDCRYLPEEHFGERTKVFQAISRHISDYQPLPDILNPEQKNRCWNDKKVEAHHAIIPTAKNTPVNLNQREWQIYHLIARQYLMQFCPDAEYRKSKITLNIAGGTFIAQARNLQVAGWKQLLGKEDSDEQQEPLLPVVKKGQILFCEKGEIVSKKTQPPKPFTDATLLSAMTGIARFVQDKELKKILRETDGLGTEATRAGIIELLFKRGFLYKKGRNIHSTETGRILIQALPDVATQPDMTAHWESQLTSISQKEMSYQQFMSTLTNFLPELMRYVNFAALRQLSQVEKPQSFSKKMSAKSKKRPT.

Positions 1–134 (MRLFIAEKPS…KLNQIQRCLI (134 aa)) constitute a Toprim domain. Residues Glu7, Asp103, and Asp105 each contribute to the Mg(2+) site. Residues 155 to 617 (FIPLATSALA…TLTNFLPELM (463 aa)) enclose the Topo IA-type catalytic domain. The segment at 194-199 (SVGRVQ) is interaction with DNA. Catalysis depends on Tyr342, which acts as the O-(5'-phospho-DNA)-tyrosine intermediate.

The protein belongs to the type IA topoisomerase family. It depends on Mg(2+) as a cofactor.

The enzyme catalyses ATP-independent breakage of single-stranded DNA, followed by passage and rejoining.. Releases the supercoiling and torsional tension of DNA, which is introduced during the DNA replication and transcription, by transiently cleaving and rejoining one strand of the DNA duplex. Introduces a single-strand break via transesterification at a target site in duplex DNA. The scissile phosphodiester is attacked by the catalytic tyrosine of the enzyme, resulting in the formation of a DNA-(5'-phosphotyrosyl)-enzyme intermediate and the expulsion of a 3'-OH DNA strand. The free DNA strand then undergoes passage around the unbroken strand, thus removing DNA supercoils. Finally, in the religation step, the DNA 3'-OH attacks the covalent intermediate to expel the active-site tyrosine and restore the DNA phosphodiester backbone. The sequence is that of DNA topoisomerase 3 from Pasteurella multocida (strain Pm70).